The sequence spans 469 residues: Argininosuccinate lyase (469 aa).

It belongs to the lyase 1 family. Argininosuccinate lyase subfamily.

It is found in the cytoplasm. It catalyses the reaction 2-(N(omega)-L-arginino)succinate = fumarate + L-arginine. Its pathway is amino-acid biosynthesis; L-arginine biosynthesis; L-arginine from L-ornithine and carbamoyl phosphate: step 3/3. The protein is Argininosuccinate lyase of Burkholderia multivorans (strain ATCC 17616 / 249).